We begin with the raw amino-acid sequence, 332 residues long: Glycerol-3-phosphate dehydrogenase [NAD(P)+] (332 aa).

Residues tryptophan 13, lysine 34, and lysine 108 each contribute to the NADPH site. Residues lysine 108, glycine 136, and serine 138 each contribute to the sn-glycerol 3-phosphate site. NADPH is bound at residue alanine 140. Sn-glycerol 3-phosphate contacts are provided by lysine 191, aspartate 244, serine 254, arginine 255, and asparagine 256. Lysine 191 functions as the Proton acceptor in the catalytic mechanism. Arginine 255 provides a ligand contact to NADPH. Valine 279 and glutamate 281 together coordinate NADPH.

This sequence belongs to the NAD-dependent glycerol-3-phosphate dehydrogenase family.

The protein localises to the cytoplasm. It carries out the reaction sn-glycerol 3-phosphate + NAD(+) = dihydroxyacetone phosphate + NADH + H(+). The catalysed reaction is sn-glycerol 3-phosphate + NADP(+) = dihydroxyacetone phosphate + NADPH + H(+). It participates in membrane lipid metabolism; glycerophospholipid metabolism. Its function is as follows. Catalyzes the reduction of the glycolytic intermediate dihydroxyacetone phosphate (DHAP) to sn-glycerol 3-phosphate (G3P), the key precursor for phospholipid synthesis. This is Glycerol-3-phosphate dehydrogenase [NAD(P)+] from Francisella tularensis subsp. tularensis (strain FSC 198).